Consider the following 578-residue polypeptide: Isocitrate dehydrogenase kinase/phosphatase (578 aa).

ATP contacts are provided by residues Ala-315–Met-321 and Lys-336. Residue Asp-371 is part of the active site.

This sequence belongs to the AceK family.

Its subcellular location is the cytoplasm. It carries out the reaction L-seryl-[isocitrate dehydrogenase] + ATP = O-phospho-L-seryl-[isocitrate dehydrogenase] + ADP + H(+). Functionally, bifunctional enzyme which can phosphorylate or dephosphorylate isocitrate dehydrogenase (IDH) on a specific serine residue. This is a regulatory mechanism which enables bacteria to bypass the Krebs cycle via the glyoxylate shunt in response to the source of carbon. When bacteria are grown on glucose, IDH is fully active and unphosphorylated, but when grown on acetate or ethanol, the activity of IDH declines drastically concomitant with its phosphorylation. This is Isocitrate dehydrogenase kinase/phosphatase from Escherichia coli O157:H7.